The chain runs to 316 residues: Glycine--tRNA ligase alpha subunit (316 aa).

This sequence belongs to the class-II aminoacyl-tRNA synthetase family. As to quaternary structure, tetramer of two alpha and two beta subunits.

It is found in the cytoplasm. The catalysed reaction is tRNA(Gly) + glycine + ATP = glycyl-tRNA(Gly) + AMP + diphosphate. The polypeptide is Glycine--tRNA ligase alpha subunit (Cupriavidus taiwanensis (strain DSM 17343 / BCRC 17206 / CCUG 44338 / CIP 107171 / LMG 19424 / R1) (Ralstonia taiwanensis (strain LMG 19424))).